A 299-amino-acid polypeptide reads, in one-letter code: MERLVEKAEILMEALPFITKFRGKTFVIKYGGNAMAKADLKVAFAQDILMLKYIGINPVIVHGGGPQIGQMLKRMGLESKFVGGLRVTDRETMEVVEMVLGGLVNKSIVMLINRYAGGHIRAVGLTGKDGGLIRAKKLDAQEYFRQMGDFRPTELLDLGHVGEVEYIDTQILKHLEEDNYIPVIAPVGFDTEGNAYNINADFVASAVAGALKAEKVIFLTDIEGLKDEQGNTVSSINVERINRMIEEGVIKGGMIPKVKACIQALSQGVKKAHILDGRIPHCVLLEIFTSEGIGTEIVS.

Residues 64–65, R86, and N197 contribute to the substrate site; that span reads GG.

Belongs to the acetylglutamate kinase family. ArgB subfamily.

Its subcellular location is the cytoplasm. It carries out the reaction N-acetyl-L-glutamate + ATP = N-acetyl-L-glutamyl 5-phosphate + ADP. It participates in amino-acid biosynthesis; L-arginine biosynthesis; N(2)-acetyl-L-ornithine from L-glutamate: step 2/4. Catalyzes the ATP-dependent phosphorylation of N-acetyl-L-glutamate. This Persephonella marina (strain DSM 14350 / EX-H1) protein is Acetylglutamate kinase.